A 198-amino-acid polypeptide reads, in one-letter code: Nucleoid occlusion factor SlmA (198 aa).

The HTH tetR-type domain maps to 11–71 (PNRKHQILES…GLIDFIEESI (61 aa)). The H-T-H motif DNA-binding region spans 34 to 53 (TTAKLAAEVGFSEAALYRHF).

This sequence belongs to the nucleoid occlusion factor SlmA family. Homodimer. Interacts with FtsZ.

The protein resides in the cytoplasm. Its subcellular location is the nucleoid. Required for nucleoid occlusion (NO) phenomenon, which prevents Z-ring formation and cell division over the nucleoid. Acts as a DNA-associated cell division inhibitor that binds simultaneously chromosomal DNA and FtsZ, and disrupts the assembly of FtsZ polymers. SlmA-DNA-binding sequences (SBS) are dispersed on non-Ter regions of the chromosome, preventing FtsZ polymerization at these regions. This is Nucleoid occlusion factor SlmA from Colwellia psychrerythraea (strain 34H / ATCC BAA-681) (Vibrio psychroerythus).